A 260-amino-acid polypeptide reads, in one-letter code: 5'-nucleotidase SurE (260 aa).

The a divalent metal cation site is built by Asp8, Asp9, Ser43, and Asn96.

It belongs to the SurE nucleotidase family. The cofactor is a divalent metal cation.

The protein resides in the cytoplasm. It catalyses the reaction a ribonucleoside 5'-phosphate + H2O = a ribonucleoside + phosphate. Nucleotidase that shows phosphatase activity on nucleoside 5'-monophosphates. In Ruegeria pomeroyi (strain ATCC 700808 / DSM 15171 / DSS-3) (Silicibacter pomeroyi), this protein is 5'-nucleotidase SurE.